The chain runs to 291 residues: Formamidopyrimidine-DNA glycosylase (291 aa).

Pro2 acts as the Schiff-base intermediate with DNA in catalysis. The active-site Proton donor is Glu3. Lys58 (proton donor; for beta-elimination activity) is an active-site residue. Residues His100, Arg123, and Lys166 each contribute to the DNA site. An FPG-type zinc finger spans residues 257-291 (SVYGREGKECLQCGTPIIRILQSGRSSFYCSQCQK). Catalysis depends on Arg281, which acts as the Proton donor; for delta-elimination activity.

Belongs to the FPG family. In terms of assembly, monomer. Zn(2+) serves as cofactor.

It carries out the reaction Hydrolysis of DNA containing ring-opened 7-methylguanine residues, releasing 2,6-diamino-4-hydroxy-5-(N-methyl)formamidopyrimidine.. It catalyses the reaction 2'-deoxyribonucleotide-(2'-deoxyribose 5'-phosphate)-2'-deoxyribonucleotide-DNA = a 3'-end 2'-deoxyribonucleotide-(2,3-dehydro-2,3-deoxyribose 5'-phosphate)-DNA + a 5'-end 5'-phospho-2'-deoxyribonucleoside-DNA + H(+). Functionally, involved in base excision repair of DNA damaged by oxidation or by mutagenic agents. Acts as a DNA glycosylase that recognizes and removes damaged bases. Has a preference for oxidized purines, such as 7,8-dihydro-8-oxoguanine (8-oxoG). Has AP (apurinic/apyrimidinic) lyase activity and introduces nicks in the DNA strand. Cleaves the DNA backbone by beta-delta elimination to generate a single-strand break at the site of the removed base with both 3'- and 5'-phosphates. The sequence is that of Formamidopyrimidine-DNA glycosylase from Bartonella tribocorum (strain CIP 105476 / IBS 506).